Reading from the N-terminus, the 317-residue chain is Putative AP2/ERF and B3 domain-containing protein Os01g0140700 (317 aa).

A disordered region spans residues methionine 1 to alanine 37. A compositionally biased stretch (acidic residues) spans glutamine 27–alanine 37. Residues arginine 66–alanine 121 constitute a DNA-binding region (AP2/ERF). The segment at residues phenylalanine 178 to lysine 287 is a DNA-binding region (TF-B3).

Its subcellular location is the nucleus. The protein is Putative AP2/ERF and B3 domain-containing protein Os01g0140700 of Oryza sativa subsp. japonica (Rice).